A 106-amino-acid polypeptide reads, in one-letter code: ATP-dependent Clp protease adapter protein ClpS (106 aa).

It belongs to the ClpS family. In terms of assembly, binds to the N-terminal domain of the chaperone ClpA.

Functionally, involved in the modulation of the specificity of the ClpAP-mediated ATP-dependent protein degradation. The polypeptide is ATP-dependent Clp protease adapter protein ClpS (Vibrio cholerae serotype O1 (strain ATCC 39541 / Classical Ogawa 395 / O395)).